A 2098-amino-acid chain; its full sequence is 1-phosphatidylinositol 3-phosphate 5-kinase (2098 aa).

The interval 1–45 (MATDDKTSPTLDSANDLPRSPTSPSHLTHFKPLTPDQDEPPFKSA) is disordered. Position 2 is an N-acetylalanine (A2). Residues S23 and S48 each carry the phosphoserine; by autocatalysis modification. Residues 57–123 (KERAEGGQGE…EPTFGGHDPR (67 aa)) form a disordered region. A compositionally biased stretch (polar residues) spans 66-88 (EQQPLSGSWTSPQLPSRTQSVRS). S88 carries the post-translational modification Phosphoserine. The FYVE-type zinc finger occupies 158–218 (DSQCKECYDC…ACTYCRKIAL (61 aa)). Zn(2+) is bound by residues C164, C167, C180, C183, C188, C191, C210, and C213. The disordered stretch occupies residues 292 to 329 (VQEDAGKSPARNRSASITNLSLDRSGSPMVPSYETSVS). 3 positions are modified to phosphoserine: S299, S307, and S312. Over residues 302 to 315 (RNRSASITNLSLDR) the composition is skewed to polar residues. A Phosphoserine; by PKB/AKT1 or PKB/AKT2 modification is found at S318. The residue at position 329 (S329) is a Phosphoserine. One can recognise a DEP domain in the interval 365 to 440 (HSSGMEFQDH…DEYALYRPLQ (76 aa)). A compositionally biased stretch (polar residues) spans 442 to 459 (TEFSETPSPDSDSVNSVE). Positions 442–469 (TEFSETPSPDSDSVNSVEGHSEPSWFKD) are disordered. Residues 460-469 (GHSEPSWFKD) are compositionally biased toward basic and acidic residues. Phosphoserine is present on S475. Residues 484-505 (GDDNLANSASPSKRTSVSSFQS) are disordered. A compositionally biased stretch (polar residues) spans 488-505 (LANSASPSKRTSVSSFQS). The tract at residues 616–868 (MMALLQQLLH…MICVAYHSQL (253 aa)) is chaperonin-like domain. Disordered stretches follow at residues 1161–1191 (RIQPKNSDPFAHSKDASSTSSGQSGSKNEGD) and 1512–1616 (FQQE…STDS). Residues 1177–1186 (SSTSSGQSGS) are compositionally biased toward low complexity. The residue at position 1522 (S1522) is a Phosphoserine; by autocatalysis. A phosphoserine mark is found at S1544 and S1549. Positions 1562–1578 (LTTLSSQSSTSSTHLQL) are enriched in low complexity. At S1669 the chain carries Phosphoserine; by autocatalysis. The tract at residues 1692–1799 (QWNSAEEGLP…PQDEVDGGDT (108 aa)) is disordered. Low complexity predominate over residues 1704–1714 (STSDSRPKSSS). A compositionally biased stretch (polar residues) spans 1723-1735 (GGQTNRTTETEPQ). A Phosphoserine modification is found at S1754. One can recognise a PIPK domain in the interval 1758–2084 (SSQKRETLRG…RFCEAMDKYF (327 aa)). The interval 1842–2098 (EEDFIRSLSH…DHWTGLGLNC (257 aa)) is catalytic. Residues S1969 and S2053 each carry the phosphoserine; by autocatalysis modification.

As to quaternary structure, component of the PI(3,5)P2 regulatory complex/PAS complex, at least composed of PIKFYVE, FIG4 and VAC14. VAC14 nucleates the assembly of the complex and serves as a scaffold by pentamerizing into a star-shaped structure, which can bind a single copy each of PIKFYVE and FIG4 and coordinates their activities. Interacts (via chaperonin-like domain) with RABEPK; the interaction recruits RABEPK to the endosomal membrane. Interacts with SPAG9. Interacts with EGFR. Autophosphorylates which inhibits its own phosphatidylinositol 3-phosphate 5-kinase activity, stimulates FIG4 lipid phosphatase activity and down-regulates lipid product formation. Dephosphorylated by FIG4 in the PI(3,5)P2 regulatory complex, at Ser-48, Ser-1669 and Ser-2053. Phosphorylated in response to insulin at Ser-318 in a protein kinase B (PKB)-dependent manner.

It localises to the endosome membrane. The protein resides in the early endosome membrane. The protein localises to the cytoplasmic vesicle. It is found in the phagosome membrane. Its subcellular location is the late endosome membrane. The catalysed reaction is a 1,2-diacyl-sn-glycero-3-phospho-(1D-myo-inositol-3-phosphate) + ATP = a 1,2-diacyl-sn-glycero-3-phospho-(1D-myo-inositol-3,5-bisphosphate) + ADP + H(+). It catalyses the reaction a 1,2-diacyl-sn-glycero-3-phospho-(1D-myo-inositol) + ATP = a 1,2-diacyl-sn-glycero-3-phospho-(1D-myo-inositol-5-phosphate) + ADP + H(+). It carries out the reaction L-seryl-[protein] + ATP = O-phospho-L-seryl-[protein] + ADP + H(+). Inhibited by apilimod and YM201636. Functionally, dual specificity kinase implicated in myriad essential cellular processes such as maintenance of endomembrane homeostasis, and endocytic-vacuolar pathway, lysosomal trafficking, nuclear transport, stress- or hormone-induced signaling and cell cycle progression. The PI(3,5)P2 regulatory complex regulates both the synthesis and turnover of phosphatidylinositol 3,5-bisphosphate (PtdIns(3,5)P2). Sole enzyme to catalyze the phosphorylation of phosphatidylinositol 3-phosphate on the fifth hydroxyl of the myo-inositol ring, to form (PtdIns(3,5)P2). Also catalyzes the phosphorylation of phosphatidylinositol on the fifth hydroxyl of the myo-inositol ring, to form phosphatidylinositol 5-phosphate (PtdIns(5)P). Has serine-protein kinase activity and is able to autophosphorylate and transphosphorylate. Autophosphorylation inhibits its own phosphatidylinositol 3-phosphate 5-kinase activity, stimulates FIG4 lipid phosphatase activity and down-regulates lipid product formation. Involved in key endosome operations such as fission and fusion in the course of endosomal cargo transport. Required for the maturation of early into late endosomes, phagosomes and lysosomes. Regulates vacuole maturation and nutrient recovery following engulfment of macromolecules, initiates the redistribution of accumulated lysosomal contents back into the endosome network. Critical regulator of the morphology, degradative activity, and protein turnover of the endolysosomal system in macrophages and platelets. In neutrophils, critical to perform chemotaxis, generate ROS, and undertake phagosome fusion with lysosomes. Plays a key role in the processing and presentation of antigens by major histocompatibility complex class II (MHC class II) mediated by CTSS. Regulates melanosome biogenesis by controlling the delivery of proteins from the endosomal compartment to the melanosome. Essential for systemic glucose homeostasis, mediates insulin-induced signals for endosome/actin remodeling in the course of GLUT4 translocation/glucose uptake activation. Supports microtubule-based endosome-to-trans-Golgi network cargo transport, through association with SPAG9 and RABEPK. Mediates EGFR trafficking to the nucleus. Its function is as follows. (Microbial infection) Required for cell entry of coronaviruses SARS-CoV and SARS-CoV-2, as well as human coronavirus EMC (HCoV-EMC) by endocytosis. The chain is 1-phosphatidylinositol 3-phosphate 5-kinase from Homo sapiens (Human).